We begin with the raw amino-acid sequence, 199 residues long: MAVAGPEIERLIQLLARLPGLGPRSARRAALHLIKKREALMVPLASALQVAIDRIQVCKTCGNIDTQSPCTVCTDPRRDPAMIVVVADVADLWALERAKASNGRYHVLGGTLSPLDGVGPQDLTIDALVQRAHAPEVSEIILALNATVDGQTTAHYITDLLQEANVKVTRLAHGVPVGGELDYLDEGTLSAAMRQRTLF.

A C4-type zinc finger spans residues 58–73 (CKTCGNIDTQSPCTVC). Residues 81-176 (AMIVVVADVA…KVTRLAHGVP (96 aa)) enclose the Toprim domain.

Belongs to the RecR family.

In terms of biological role, may play a role in DNA repair. It seems to be involved in an RecBC-independent recombinational process of DNA repair. It may act with RecF and RecO. The protein is Recombination protein RecR of Bradyrhizobium sp. (strain ORS 278).